Here is a 514-residue protein sequence, read N- to C-terminus: MSISSDEVNFLVYRYLQESGFSHSAFTFGIESHISQSNINGALVPPAALISIIQKGLQYVEAEVSINEDGTLFDGRPIESLSLIDAVMPDVVQTRQQAYRDKLAQQQAAAAAAAAAAASQQGSAKNGENTANGEENGAHTIANNHTDMMEVDGDVEIPPNKAVVLRGHESEVFICAWNPVSDLLASGSGDSTARIWNLSENSTSGSTQLVLRHCIREGGQDVPSNKDVTSLDWNSEGTLLATGSYDGFARIWTKDGNLASTLGQHKGPIFALKWNKKGNFILSAGVDKTTIIWDAHTGEAKQQFPFHSAPALDVDWQSNNTFASCSTDMCIHVCKLGQDRPIKTFQGHTNEVNAIKWDPTGNLLASCSDDMTLKIWSMKQDNCVHDLQAHNKEIYTIKWSPTGPGTNNPNANLMLASASFDSTVRLWDVDRGICIHTLTKHQEPVYSVAFSPDGRYLASGSFDKCVHIWNTQTGALVHSYRGTGGIFEVCWNAAGDKVGASASDGSVCVLDLRK.

Ser-2 is modified (N-acetylserine). The LisH domain maps to 4–36 (SSDEVNFLVYRYLQESGFSHSAFTFGIESHISQ). Positions 41–86 (GALVPPAALISIIQKGLQYVEAEVSINEDGTLFDGRPIESLSLIDA) constitute an F-box-like domain. At Lys-102 the chain carries N6-acetyllysine. Ser-119 is modified (phosphoserine). A compositionally biased stretch (low complexity) spans 120–135 (QQGSAKNGENTANGEE). The tract at residues 120 to 139 (QQGSAKNGENTANGEENGAH) is disordered. 8 WD repeats span residues 167 to 206 (GHES…TSGS), 223 to 262 (PSNK…ASTL), 264 to 303 (QHKG…AKQQ), 306 to 344 (FHSA…PIKT), 347 to 386 (GHTN…CVHD), 389 to 437 (AHNK…CIHT), 440 to 479 (KHQE…LVHS), and 481 to 513 (RGTG…LDLR). Lys-277 participates in a covalent cross-link: Glycyl lysine isopeptide (Lys-Gly) (interchain with G-Cter in SUMO2).

The protein belongs to the WD repeat EBI family. As to quaternary structure, component of the N-Cor repressor complex, at least composed of NCOR1, NCOR2, HDAC3, TBL1X, TBL1XR1, CORO2A and GPS2. Probable component of some E3 ubiquitin ligase complex. Interacts with histones H2B and H4. Interacts with MECP2; bridges interaction between MECP2 and NCOR1. Interacts with USP44. Widely expressed including the pituitary, hypothalamus, white and brown adipose tissue, muscle and liver.

Its subcellular location is the nucleus. F-box-like protein involved in the recruitment of the ubiquitin/19S proteasome complex to nuclear receptor-regulated transcription units. Plays an essential role in transcription activation mediated by nuclear receptors. Probably acts as integral component of the N-Cor corepressor complex that mediates the recruitment of the 19S proteasome complex, leading to the subsequent proteasomal degradation of N-Cor complex, thereby allowing cofactor exchange, and transcription activation. This is F-box-like/WD repeat-containing protein TBL1XR1 (TBL1XR1) from Homo sapiens (Human).